A 468-amino-acid chain; its full sequence is Mitochondrial dynamics protein MID51 (468 aa).

Residues 1-29 lie on the Mitochondrial intermembrane side of the membrane; it reads MAGVNGDRKGKKDDNGLGTAIDFVLSNAK. Residues 30–47 form a helical membrane-spanning segment; the sequence is LVLGVGGAAMLGIATLAV. The Cytoplasmic segment spans residues 48–468; sequence KRMYDRALSA…SDPESLLRTV (421 aa). Residues 50–196 are dimerization; it reads MYDRALSAPS…LSGSLYDDLQ (147 aa). Residues 56–123 form a disordered region; sequence SAPSSPTKAD…RGLARGGRPA (68 aa). Polar residues predominate over residues 91–108; it reads QNVSRSLQTLPTSSSSFK. The important for interaction with DNM1L stretch occupies residues 161 to 170; that stretch reads AALDICAELR. ADP is bound by residues S188, S190, and H202. Positions 235-244 are important for interaction with DNM1L; that stretch reads RRENLEYFPR. ADP-binding residues include S344, R346, and K372.

The protein belongs to the MID49/MID51 family. In terms of assembly, homodimer.

Its subcellular location is the mitochondrion outer membrane. In terms of biological role, mitochondrial outer membrane protein which regulates mitochondrial fission/fusion dynamics. Promotes the recruitment and association of the fission mediator dynamin-related protein 1 (DNM1L) to the mitochondrial surface independently of the mitochondrial fission FIS1 and MFF proteins. Regulates DNM1L GTPase activity and DNM1L oligomerization. This is Mitochondrial dynamics protein MID51 (mief1) from Danio rerio (Zebrafish).